We begin with the raw amino-acid sequence, 416 residues long: Gamma-glutamyl phosphate reductase (416 aa).

It belongs to the gamma-glutamyl phosphate reductase family.

The protein resides in the cytoplasm. The enzyme catalyses L-glutamate 5-semialdehyde + phosphate + NADP(+) = L-glutamyl 5-phosphate + NADPH + H(+). It participates in amino-acid biosynthesis; L-proline biosynthesis; L-glutamate 5-semialdehyde from L-glutamate: step 2/2. Its function is as follows. Catalyzes the NADPH-dependent reduction of L-glutamate 5-phosphate into L-glutamate 5-semialdehyde and phosphate. The product spontaneously undergoes cyclization to form 1-pyrroline-5-carboxylate. The sequence is that of Gamma-glutamyl phosphate reductase from Salmonella schwarzengrund (strain CVM19633).